The chain runs to 285 residues: Bark agglutinin I polypeptide A (285 aa).

The N-terminal stretch at 1-31 (MTSYNFKTQTSFPLLLSISFFFLLLLNKVNS) is a signal peptide. N-linked (GlcNAc...) asparagine glycosylation occurs at Asn-147. Glu-156 and Asp-158 together coordinate Mn(2+). Ca(2+) is bound by residues Asp-158, Phe-160, Asn-162, and Asp-166. Mn(2+) is bound by residues Asp-166 and His-171. Asn-188 carries an N-linked (GlcNAc...) asparagine glycan.

The protein belongs to the leguminous lectin family. As to quaternary structure, RPbAI is composed of two polypeptides, A and B, that associate into five different tetrameric isolectins. The A4 combination is the only one devoid of agglutination activity. Isoform B4 displays maximal agglutination activity. As to expression, strong expression in seed. Lower levels in the flower, and the bark of the roots. No expression in leaf. The lectin accumulates in the inner bark in autumn.

Its function is as follows. N-acetyl-D-galactosamine specific lectin. Bark lectins are storage protein that probably maintains stocks of nitrogen during dormant period. Self-aggregatable molecules that can bind their own carbohydrate side chains. They could also play a role in the plant's defense against phytophagous invertebrates or herbivorous higher animals. This Robinia pseudoacacia (Black locust) protein is Bark agglutinin I polypeptide A.